Here is a 273-residue protein sequence, read N- to C-terminus: Formamidopyrimidine-DNA glycosylase (273 aa).

Catalysis depends on Pro-2, which acts as the Schiff-base intermediate with DNA. Residue Glu-3 is the Proton donor of the active site. Residue Lys-59 is the Proton donor; for beta-elimination activity of the active site. Residues His-93, Arg-111, and Arg-154 each contribute to the DNA site. The FPG-type zinc finger occupies 239 to 273 (KVYGRGGEPCKECGHTLVRIRLAGRSTVFCPCCQV). Arg-263 (proton donor; for delta-elimination activity) is an active-site residue.

Belongs to the FPG family. Monomer. Zn(2+) is required as a cofactor.

The enzyme catalyses Hydrolysis of DNA containing ring-opened 7-methylguanine residues, releasing 2,6-diamino-4-hydroxy-5-(N-methyl)formamidopyrimidine.. The catalysed reaction is 2'-deoxyribonucleotide-(2'-deoxyribose 5'-phosphate)-2'-deoxyribonucleotide-DNA = a 3'-end 2'-deoxyribonucleotide-(2,3-dehydro-2,3-deoxyribose 5'-phosphate)-DNA + a 5'-end 5'-phospho-2'-deoxyribonucleoside-DNA + H(+). Its function is as follows. Involved in base excision repair of DNA damaged by oxidation or by mutagenic agents. Acts as a DNA glycosylase that recognizes and removes damaged bases. Has a preference for oxidized purines, such as 7,8-dihydro-8-oxoguanine (8-oxoG). Has AP (apurinic/apyrimidinic) lyase activity and introduces nicks in the DNA strand. Cleaves the DNA backbone by beta-delta elimination to generate a single-strand break at the site of the removed base with both 3'- and 5'-phosphates. This Desulfitobacterium hafniense (strain DSM 10664 / DCB-2) protein is Formamidopyrimidine-DNA glycosylase.